Here is a 544-residue protein sequence, read N- to C-terminus: Chaperonin GroEL (544 aa).

ATP is bound by residues 29–32, 86–90, Gly-413, 476–478, and Asp-492; these read TLGP, DGTTT, and NAA.

This sequence belongs to the chaperonin (HSP60) family. As to quaternary structure, forms a cylinder of 14 subunits composed of two heptameric rings stacked back-to-back. Interacts with the co-chaperonin GroES.

The protein resides in the cytoplasm. It catalyses the reaction ATP + H2O + a folded polypeptide = ADP + phosphate + an unfolded polypeptide.. Functionally, together with its co-chaperonin GroES, plays an essential role in assisting protein folding. The GroEL-GroES system forms a nano-cage that allows encapsulation of the non-native substrate proteins and provides a physical environment optimized to promote and accelerate protein folding. The protein is Chaperonin GroEL of Bacillus cereus (strain G9842).